Reading from the N-terminus, the 188-residue chain is Probable RNA 2'-phosphotransferase (188 aa).

This sequence belongs to the KptA/TPT1 family.

Its function is as follows. Removes the 2'-phosphate from RNA via an intermediate in which the phosphate is ADP-ribosylated by NAD followed by a presumed transesterification to release the RNA and generate ADP-ribose 1''-2''-cyclic phosphate (APPR&gt;P). May function as an ADP-ribosylase. This chain is Probable RNA 2'-phosphotransferase, found in Pseudomonas savastanoi pv. phaseolicola (strain 1448A / Race 6) (Pseudomonas syringae pv. phaseolicola (strain 1448A / Race 6)).